A 250-amino-acid polypeptide reads, in one-letter code: 3-deoxy-manno-octulosonate cytidylyltransferase (250 aa).

The protein belongs to the KdsB family.

Its subcellular location is the cytoplasm. The catalysed reaction is 3-deoxy-alpha-D-manno-oct-2-ulosonate + CTP = CMP-3-deoxy-beta-D-manno-octulosonate + diphosphate. It participates in nucleotide-sugar biosynthesis; CMP-3-deoxy-D-manno-octulosonate biosynthesis; CMP-3-deoxy-D-manno-octulosonate from 3-deoxy-D-manno-octulosonate and CTP: step 1/1. The protein operates within bacterial outer membrane biogenesis; lipopolysaccharide biosynthesis. In terms of biological role, activates KDO (a required 8-carbon sugar) for incorporation into bacterial lipopolysaccharide in Gram-negative bacteria. This is 3-deoxy-manno-octulosonate cytidylyltransferase from Rhodopirellula baltica (strain DSM 10527 / NCIMB 13988 / SH1).